The chain runs to 587 residues: L-ornithine N(5)-monooxygenase (587 aa).

FAD-binding positions include 53–61 and Q72; that span reads EKHTSFQWH. K77 serves as a coordination point for substrate. Position 235–238 (235–238) interacts with NADP(+); it reads GGQS. Substrate contacts are provided by residues 282–285 and N312; that span reads NEVF. NADP(+) is bound at residue 312–314; that stretch reads NYS. The tract at residues 488 to 511 is disordered; the sequence is DNSAASGVSGASTPLTSPSEEEGK. The segment covering 491 to 505 has biased composition (polar residues); it reads AASGVSGASTPLTSP. 567-569 lines the FAD pocket; the sequence is TLL. Residue S570 coordinates substrate.

The protein belongs to the lysine N(6)-hydroxylase/L-ornithine N(5)-oxygenase family. Homotetramer. FAD serves as cofactor.

It carries out the reaction L-ornithine + NADPH + O2 = N(5)-hydroxy-L-ornithine + NADP(+) + H2O. It catalyses the reaction L-ornithine + NADH + O2 = N(5)-hydroxy-L-ornithine + NAD(+) + H2O. It functions in the pathway siderophore biosynthesis; ferrichrome biosynthesis. L-ornithine N(5)-monooxygenase; part of the siderophore biosynthetic pathway. Omphalotus olearius produces ferrichrome A, but no other siderophore has been detected. Ferrichrome A consists of a hexapeptide ring made up of one glycine, two serine, and three N(5)-hydroxyornithine amino acid residues, the latter acylated by trans-(alpha-methyl)-glutaconic acid residues. The biosynthesis of ferrichrome A depends on the hydroxylation of ornithine to N(5)-hydroxyornithine, catalyzed by the monooxygenase omo1. The second step, the acylation of N(5)-hydroxy-L-ornithine is probably catalyzed by the N-acyltransferase ato1. Finally, assembly of ferrichrome A is catalyzed by the nonribosomal peptide synthase (NRPS) fso1. The chain is L-ornithine N(5)-monooxygenase from Omphalotus olearius (Jack o'lantern).